The primary structure comprises 329 residues: Vanillate O-demethylase oxygenase subunit (329 aa).

The 84-residue stretch at 1-84 (MICNERMVIY…AQERHGFIWV (84 aa)) folds into the Rieske domain. Positions 24, 26, 43, and 46 each coordinate [2Fe-2S] cluster.

The protein belongs to the bacterial ring-hydroxylating dioxygenase alpha subunit family. This demethylase system consists of two proteins: an oxygenase and an oxygenase reductase. Requires [2Fe-2S] cluster as cofactor. Fe cation is required as a cofactor.

It carries out the reaction vanillate + NADH + O2 + H(+) = 3,4-dihydroxybenzoate + formaldehyde + NAD(+) + H2O. It participates in xenobiotic degradation; vanillyl-alcohol degradation. This is Vanillate O-demethylase oxygenase subunit (vanA) from Pseudomonas sp. (strain ATCC 19151).